The sequence spans 686 residues: Pentatricopeptide repeat-containing protein At4g08210 (686 aa).

PPR repeat units follow at residues 4–38 (DLKL…GISQ), 39–69 (NVFI…MSER), 70–104 (NIVT…EEEA), 106–140 (NEFM…NLRG), 141–171 (DVVL…ILRP), 172–206 (SSTS…NVVS), 207–236 (WNCL…GLVL), 237–271 (DGFA…GLES), 272–302 (SPFA…EKLA), 306–340 (SVAV…DLCF), 341–375 (DSYT…GYEL), 376–406 (DYIV…LPNK), 407–441 (DIIA…GLDA), 442–476 (DQFI…GYES), 477–507 (EPVT…MLER), 508–542 (DVVS…GIEP), 543–573 (NKVT…MKSE), and 579–609 (YLEH…MPLE). A type E motif; degenerate region spans residues 614–686 (IWTSLLTACG…AKESGMSWII (73 aa)).

This sequence belongs to the PPR family. PCMP-E subfamily.

This chain is Pentatricopeptide repeat-containing protein At4g08210 (PCMP-E100), found in Arabidopsis thaliana (Mouse-ear cress).